A 43-amino-acid polypeptide reads, in one-letter code: Protein PsbN (43 aa).

The chain crosses the membrane as a helical span at residues 5–27 (TLVTIFISGSLVSFTGYALYTAF).

It belongs to the PsbN family.

It localises to the plastid. The protein localises to the chloroplast thylakoid membrane. May play a role in photosystem I and II biogenesis. The protein is Protein PsbN of Piper cenocladum (Ant piper).